Consider the following 99-residue polypeptide: A-type ATP synthase subunit F (99 aa).

The protein belongs to the V-ATPase F subunit family. Has multiple subunits with at least A(3), B(3), C, D, E, F, H, I and proteolipid K(x).

It is found in the cell membrane. Functionally, component of the A-type ATP synthase that produces ATP from ADP in the presence of a proton gradient across the membrane. The chain is A-type ATP synthase subunit F from Methanococcus maripaludis (strain C7 / ATCC BAA-1331).